The following is a 228-amino-acid chain: Octanoyltransferase (228 aa).

The 181-residue stretch at 37–217 (AGGPDTLLLL…AVCDALDGRL (181 aa)) folds into the BPL/LPL catalytic domain. Residues 75-82 (RGGKITWH), 147-149 (AIG), and 160-162 (GFA) each bind substrate. Cys-178 serves as the catalytic Acyl-thioester intermediate.

It belongs to the LipB family.

It is found in the cytoplasm. It catalyses the reaction octanoyl-[ACP] + L-lysyl-[protein] = N(6)-octanoyl-L-lysyl-[protein] + holo-[ACP] + H(+). It functions in the pathway protein modification; protein lipoylation via endogenous pathway; protein N(6)-(lipoyl)lysine from octanoyl-[acyl-carrier-protein]: step 1/2. In terms of biological role, catalyzes the transfer of endogenously produced octanoic acid from octanoyl-acyl-carrier-protein onto the lipoyl domains of lipoate-dependent enzymes. Lipoyl-ACP can also act as a substrate although octanoyl-ACP is likely to be the physiological substrate. In Mycolicibacterium smegmatis (strain ATCC 700084 / mc(2)155) (Mycobacterium smegmatis), this protein is Octanoyltransferase.